The following is a 144-amino-acid chain: Prefoldin subunit alpha (144 aa).

The protein belongs to the prefoldin subunit alpha family. In terms of assembly, heterohexamer of two alpha and four beta subunits.

The protein resides in the cytoplasm. Functionally, molecular chaperone capable of stabilizing a range of proteins. Seems to fulfill an ATP-independent, HSP70-like function in archaeal de novo protein folding. This Methanococcus maripaludis (strain DSM 14266 / JCM 13030 / NBRC 101832 / S2 / LL) protein is Prefoldin subunit alpha.